A 557-amino-acid polypeptide reads, in one-letter code: Dihydroxy-acid dehydratase (557 aa).

A [2Fe-2S] cluster-binding site is contributed by cysteine 49. Aspartate 81 lines the Mg(2+) pocket. Cysteine 122 lines the [2Fe-2S] cluster pocket. Residues aspartate 123 and lysine 124 each coordinate Mg(2+). Position 124 is an N6-carboxylysine (lysine 124). Cysteine 194 contributes to the [2Fe-2S] cluster binding site. Glutamate 446 is a binding site for Mg(2+). The active-site Proton acceptor is serine 472.

It belongs to the IlvD/Edd family. In terms of assembly, homodimer. [2Fe-2S] cluster is required as a cofactor. Mg(2+) serves as cofactor.

The catalysed reaction is (2R)-2,3-dihydroxy-3-methylbutanoate = 3-methyl-2-oxobutanoate + H2O. It carries out the reaction (2R,3R)-2,3-dihydroxy-3-methylpentanoate = (S)-3-methyl-2-oxopentanoate + H2O. It participates in amino-acid biosynthesis; L-isoleucine biosynthesis; L-isoleucine from 2-oxobutanoate: step 3/4. Its pathway is amino-acid biosynthesis; L-valine biosynthesis; L-valine from pyruvate: step 3/4. In terms of biological role, functions in the biosynthesis of branched-chain amino acids. Catalyzes the dehydration of (2R,3R)-2,3-dihydroxy-3-methylpentanoate (2,3-dihydroxy-3-methylvalerate) into 2-oxo-3-methylpentanoate (2-oxo-3-methylvalerate) and of (2R)-2,3-dihydroxy-3-methylbutanoate (2,3-dihydroxyisovalerate) into 2-oxo-3-methylbutanoate (2-oxoisovalerate), the penultimate precursor to L-isoleucine and L-valine, respectively. The polypeptide is Dihydroxy-acid dehydratase (Prochlorococcus marinus (strain MIT 9301)).